Consider the following 265-residue polypeptide: Synaptoporin (265 aa).

Residues 1 to 4 (MCMV) are Cytoplasmic-facing. Positions 1 to 202 (MCMVIFAPLF…NIWFVFKETG (202 aa)) constitute an MARVEL domain. The chain crosses the membrane as a helical span at residues 5 to 25 (IFAPLFAIFAFATCGGYSGGL). At 26–81 (RLSVDCVNKTESNLSIDIAFAYPFRLHQVTFEVPTCEGKERQKLALIGDSSSSAEF) the chain is on the vesicular side. Residues N33 and N38 are each glycosylated (N-linked (GlcNAc...) asparagine). A helical membrane pass occupies residues 82–102 (FVTVAVFAFLYSLAATVVYIF). Residues 103-114 (FQNKYRENNRGP) are Cytoplasmic-facing. A helical transmembrane segment spans residues 115–135 (LIDFIVTVVFSFLWLVGSSAW). Residues 136–177 (AKGLSDVKVATDPKEVLLLMSACKQPSNKCMAIHSPVMSSLN) are Vesicular-facing. Residues 178–198 (TSVVFGFLNFILWAGNIWFVF) traverse the membrane as a helical segment. At 199–265 (KETGWHSSGQ…TGPTSFTNQI (67 aa)) the chain is on the cytoplasmic side. 5 consecutive repeat copies span residues 210–214 (YLSDP), 222–226 (YNQGG), 227–231 (YNQDS), 232–236 (YGSSS), and 238–242 (YSQQA). Residues 210 to 242 (YLSDPMEKHSSSYNQGGYNQDSYGSSSGYSQQA) are 5 X approximate repeats. S212 is subject to Phosphoserine. Positions 221 to 265 (SYNQGGYNQDSYGSSSGYSQQASLGPTSDEFGQQPTGPTSFTNQI) are disordered. Positions 224-243 (QGGYNQDSYGSSSGYSQQAS) are enriched in low complexity. The segment covering 244 to 265 (LGPTSDEFGQQPTGPTSFTNQI) has biased composition (polar residues).

Belongs to the synaptophysin/synaptobrevin family.

It is found in the cytoplasmic vesicle. The protein resides in the secretory vesicle. Its subcellular location is the synaptic vesicle membrane. The protein localises to the synapse. It localises to the synaptosome. In terms of biological role, intrinsic membrane protein of small synaptic vesicles. Probable vesicular channel protein. The protein is Synaptoporin (SYNPR) of Homo sapiens (Human).